Here is a 389-residue protein sequence, read N- to C-terminus: Leucine aminopeptidase 1 (389 aa).

Positions 1-19 (MKLPALLTLGVAASTMVLA) are cleaved as a signal peptide. A propeptide spanning residues 20-88 (AIAPDQVPLN…LPKVFPTPAV (69 aa)) is cleaved from the precursor. Asn-96, Asn-119, Asn-149, Asn-164, and Asn-181 each carry an N-linked (GlcNAc...) asparagine glycan. 2 residues coordinate Zn(2+): His-189 and Asp-208. A glycan (N-linked (GlcNAc...) asparagine) is linked at Asn-233. Residues Glu-247 and Asp-274 each coordinate Zn(2+). Cysteines 323 and 327 form a disulfide. A Zn(2+)-binding site is contributed by His-356.

This sequence belongs to the peptidase M28 family. M28E subfamily. As to quaternary structure, monomer. It depends on Zn(2+) as a cofactor.

The protein resides in the secreted. Functionally, extracellular aminopeptidase that allows assimilation of proteinaceous substrates. The chain is Leucine aminopeptidase 1 (LAP1) from Paracoccidioides brasiliensis (strain Pb18).